A 354-amino-acid polypeptide reads, in one-letter code: Uroporphyrinogen decarboxylase (354 aa).

Substrate contacts are provided by residues 27 to 31, Asp77, Tyr154, Thr209, and His327; that span reads RQAGR.

Belongs to the uroporphyrinogen decarboxylase family. In terms of assembly, homodimer.

Its subcellular location is the cytoplasm. The enzyme catalyses uroporphyrinogen III + 4 H(+) = coproporphyrinogen III + 4 CO2. It functions in the pathway porphyrin-containing compound metabolism; protoporphyrin-IX biosynthesis; coproporphyrinogen-III from 5-aminolevulinate: step 4/4. Its function is as follows. Catalyzes the decarboxylation of four acetate groups of uroporphyrinogen-III to yield coproporphyrinogen-III. The protein is Uroporphyrinogen decarboxylase of Salmonella dublin (strain CT_02021853).